We begin with the raw amino-acid sequence, 100 residues long: UPF0235 protein NE0395 (100 aa).

This sequence belongs to the UPF0235 family.

The sequence is that of UPF0235 protein NE0395 from Nitrosomonas europaea (strain ATCC 19718 / CIP 103999 / KCTC 2705 / NBRC 14298).